The sequence spans 662 residues: Serine/threonine kinase-like domain-containing protein STKLD1 (662 aa).

The 202-residue stretch at 1–202 (MLNPGALGVN…ILDMATCSFL (202 aa)) folds into the Protein kinase domain. Residues 2–10 (LNPGALGVN) and K25 contribute to the ATP site. A disordered region spans residues 639-662 (LQEDQLEPPAGQEAPLQGEPLFRP).

The protein belongs to the protein kinase superfamily. Ser/Thr protein kinase family. STKL subfamily.

This is Serine/threonine kinase-like domain-containing protein STKLD1 (Stkld1) from Mus musculus (Mouse).